The sequence spans 413 residues: NAD-dependent dihydropyrimidine dehydrogenase subunit PreT (413 aa).

An NAD(+)-binding site is contributed by Glu287.

This sequence belongs to the NADH dehydrogenase family. In terms of assembly, heterotetramer of 2 PreA and 2 PreT subunits.

It carries out the reaction 5,6-dihydrouracil + NAD(+) = uracil + NADH + H(+). It catalyses the reaction 5,6-dihydrothymine + NAD(+) = thymine + NADH + H(+). Involved in pyrimidine base degradation. Catalyzes physiologically the reduction of uracil to 5,6-dihydrouracil (DHU) by using NADH as a specific cosubstrate. It also catalyzes the reverse reaction and the reduction of thymine to 5,6-dihydrothymine (DHT). The protein is NAD-dependent dihydropyrimidine dehydrogenase subunit PreT (preT) of Salmonella typhimurium (strain LT2 / SGSC1412 / ATCC 700720).